A 220-amino-acid chain; its full sequence is Large ribosomal subunit protein bL9 (220 aa).

Over residues 167-184 the composition is skewed to low complexity; that stretch reads AAAEVEQAEDVAAAEQQD. Residues 167–220 form a disordered region; it reads AAAEVEQAEDVAAAEQQDSSPVDDHADDADGATGGEGRDEGAGDASDGEEMPST.

It belongs to the bacterial ribosomal protein bL9 family.

In terms of biological role, binds to the 23S rRNA. This Anaplasma marginale (strain St. Maries) protein is Large ribosomal subunit protein bL9.